A 207-amino-acid polypeptide reads, in one-letter code: Ribosomal RNA small subunit methyltransferase G (207 aa).

Residues Gly-73, Leu-78, 124–125 (VE), and Arg-139 contribute to the S-adenosyl-L-methionine site.

The protein belongs to the methyltransferase superfamily. RNA methyltransferase RsmG family.

The protein localises to the cytoplasm. The catalysed reaction is guanosine(527) in 16S rRNA + S-adenosyl-L-methionine = N(7)-methylguanosine(527) in 16S rRNA + S-adenosyl-L-homocysteine. Specifically methylates the N7 position of guanine in position 527 of 16S rRNA. This Shigella dysenteriae serotype 1 (strain Sd197) protein is Ribosomal RNA small subunit methyltransferase G.